The chain runs to 433 residues: Zinc carboxypeptidase A 1 (433 aa).

The first 28 residues, 1 to 28, serve as a signal peptide directing secretion; it reads MVRLNSAAGSRWWAPAMAILAVALSVEA. Residues 130 to 423 enclose the Peptidase M14 domain; that stretch reads DYHTLEEIHA…DSLITLLEES (294 aa). Residues histidine 187 and glutamate 190 each coordinate Zn(2+). Cysteine 253 and cysteine 276 form a disulfide bridge. Residue histidine 312 participates in Zn(2+) binding. Residue glutamate 387 is the Proton donor/acceptor of the active site.

This sequence belongs to the peptidase M14 family. It depends on Zn(2+) as a cofactor. As to expression, expressed in the posterior midgut in pupae and female adults.

It localises to the secreted. Involved in the digestion of the blood meal. This Anopheles gambiae (African malaria mosquito) protein is Zinc carboxypeptidase A 1.